Consider the following 782-residue polypeptide: Cadherin-5 (782 aa).

The N-terminal stretch at 1-22 (MQVLVMLLAAAGTYLGLLTAPT) is a signal peptide. The propeptide occupies 23–44 (AASNPGRQDTPSTLPLHRRQKR). Cadherin domains are found at residues 45–148 (DWIW…WPVF), 149–255 (TQLV…FPVF), 256–370 (TQTR…PPNF), 371–475 (KQPF…DNAP), and 476–592 (EFAK…MGAQ). Over 45–598 (DWIWNQMHID…MGAQVGVSIQ (554 aa)) the chain is Extracellular. Residues Glu55 and Glu56 each coordinate Ca(2+). The N-linked (GlcNAc...) asparagine glycan is linked to Asn58. Ca(2+)-binding residues include Asp106, Glu108, Asp140, Ile141, Asn142, Asp143, and Asn144. The N-linked (GlcNAc...) asparagine glycan is linked to Asn154. Positions 174, 176, 183, and 228 each coordinate Ca(2+). Asn360, Asn440, Asn522, and Asn534 each carry an N-linked (GlcNAc...) asparagine glycan. The chain crosses the membrane as a helical span at residues 599–619 (ALVAIFLCILTIAVISLLVYL). A required for interaction with PALS1 region spans residues 620 to 659 (RRRLRKQARAHGKSVPEIHEQLVTYDEEGGGEMDTTSYDV). At 620–782 (RRRLRKQARA…GSDPREELLY (163 aa)) the chain is on the cytoplasmic side.

As to quaternary structure, part of a complex composed of AMOTL2, MAGI1 and CDH5, within the complex AMOTL2 acts as a scaffold protein for the interaction of MAGI1 with CDH5. The complex is required for coupling actin fibers to cell junctions in endothelial cells. Within the complex AMOTL2 (via its N-terminus) interacts with CDH5. Interacts (via cadherin 5 domain) with PTPRB. Interacts with TRPC4. Interacts with KRIT1. Interacts with PARD3. Interacts with RTN4 (isoform B). Interacts with PALS1; the interaction promotes PALS1 localization to cell junctions and is required for CDH5-mediated vascular lumen formation and endothelial cell. Interacts with CTNND1/p120-catenin; the interaction controls CADH5 endocytosis. Phosphorylated on tyrosine residues by KDR/VEGFR-2. Dephosphorylated by PTPRB. In terms of processing, O-glycosylated.

Its subcellular location is the cell junction. The protein resides in the adherens junction. It is found in the cell membrane. The protein localises to the cytoplasm. In terms of biological role, cadherins are calcium-dependent cell adhesion proteins. They preferentially interact with themselves in a homophilic manner in connecting cells; cadherins may thus contribute to the sorting of heterogeneous cell types. This cadherin may play a important role in endothelial cell biology through control of the cohesion and organization of the intercellular junctions. It associates with alpha-catenin forming a link to the cytoskeleton. Plays a role in coupling actin fibers to cell junctions in endothelial cells, via acting as a cell junctional complex anchor for AMOTL2 and MAGI1. Acts in concert with KRIT1 and PALS1 to establish and maintain correct endothelial cell polarity and vascular lumen. These effects are mediated by recruitment and activation of the Par polarity complex and RAP1B. Required for activation of PRKCZ and for localization of phosphorylated PRKCZ, PARD3, TIAM1 and RAP1B to the cell junction. Associates with CTNND1/p120-catenin to control CADH5 endocytosis. The sequence is that of Cadherin-5 from Sus scrofa (Pig).